Consider the following 143-residue polypeptide: uncharacterized protein (143 aa).

Residues 24-78 (IRQRRRWQNMSQAALGEAIGVTFQQVQKYEKGSNRVGAGRLQQISDALEVHPSYF) form the HTH cro/C1-type domain. A DNA-binding region (H-T-H motif) is located at residues 35–54 (QAALGEAIGVTFQQVQKYEK).

This is an uncharacterized protein from Sinorhizobium fredii (strain NBRC 101917 / NGR234).